The following is a 505-amino-acid chain: Lysine--tRNA ligase (505 aa).

Mg(2+) contacts are provided by Glu-415 and Glu-422.

The protein belongs to the class-II aminoacyl-tRNA synthetase family. As to quaternary structure, homodimer. Mg(2+) is required as a cofactor.

It localises to the cytoplasm. It carries out the reaction tRNA(Lys) + L-lysine + ATP = L-lysyl-tRNA(Lys) + AMP + diphosphate. The sequence is that of Lysine--tRNA ligase from Citrobacter koseri (strain ATCC BAA-895 / CDC 4225-83 / SGSC4696).